A 642-amino-acid chain; its full sequence is MPVITLPDGSQRHYDHAVSPLDVALDIGPGLAKACIAGRVDGELIDASDKIDTDAQLAIITAKDDAGLEIIRHSCAHLLGHAIKQLWPDTKMAIGPVIDNGFYYDVDIDRTLTQEDIELLEKRMHELADTDYDVIKKKVSWQEARDAFAARGETYKIAILDENISHDDRPGLYHHEEYIDMCRGPHVPNMRFCHHFKLQKTSGAYWRGDSKNKMLQRIYGTAWADKKQLASYLQRLEEASKRDHRKIGKQLDLYHMQEEAPGMVFWHNDGWTIFRELEAFVRMKLKSYQYQEVKGPFMMDRVMWEKTGHWDNYKEAMFTTSSENREYCIKPMNCPGHVQIFNQGLKSYRDLPLRMAEFGSCHRNEPSGSLHGLMRVRGFTQDDAHIFCTEEQVRDEVNSCIKMVYDMYSTFGFEKIVVKLSTRPEKRIGSDEMWDRAEADLAAALTENNIEFAYQPGEGAFYGPKIEFTLHDCLDRAWQCGTVQLDFSLPGRLSASYVGESNERQVPVMIHRAILGSMERFIGILTEEFAGFFPTWLAPVQVVIINITDSQSDYVNELTQKLQEAGIRVKADLRNEKIGFKIREHTLRRVPYMLVCGDKEVEAGKVAVRTRRGKDLGSLDVSEVISKLQQEIRSRSLHQLEV.

The TGS domain maps to 1-61 (MPVITLPDGS…DTDAQLAIIT (61 aa)). A catalytic region spans residues 243–534 (DHRKIGKQLD…LTEEFAGFFP (292 aa)). Zn(2+)-binding residues include C334, H385, and H511.

It belongs to the class-II aminoacyl-tRNA synthetase family. As to quaternary structure, homodimer. It depends on Zn(2+) as a cofactor.

Its subcellular location is the cytoplasm. It catalyses the reaction tRNA(Thr) + L-threonine + ATP = L-threonyl-tRNA(Thr) + AMP + diphosphate + H(+). Functionally, catalyzes the attachment of threonine to tRNA(Thr) in a two-step reaction: L-threonine is first activated by ATP to form Thr-AMP and then transferred to the acceptor end of tRNA(Thr). Also edits incorrectly charged L-seryl-tRNA(Thr). The protein is Threonine--tRNA ligase of Pectobacterium atrosepticum (strain SCRI 1043 / ATCC BAA-672) (Erwinia carotovora subsp. atroseptica).